An 89-amino-acid chain; its full sequence is Small ribosomal subunit protein uS15 (89 aa).

It belongs to the universal ribosomal protein uS15 family. In terms of assembly, part of the 30S ribosomal subunit. Forms a bridge to the 50S subunit in the 70S ribosome, contacting the 23S rRNA.

Its function is as follows. One of the primary rRNA binding proteins, it binds directly to 16S rRNA where it helps nucleate assembly of the platform of the 30S subunit by binding and bridging several RNA helices of the 16S rRNA. Forms an intersubunit bridge (bridge B4) with the 23S rRNA of the 50S subunit in the ribosome. This Methylococcus capsulatus (strain ATCC 33009 / NCIMB 11132 / Bath) protein is Small ribosomal subunit protein uS15.